Consider the following 338-residue polypeptide: Sporulation protein YdcC (338 aa).

Residues 8–25 traverse the membrane as a helical segment; it reads FVLLLTGLLAVLILSACG.

The protein resides in the cell membrane. Required for efficient sporulation. The protein is Sporulation protein YdcC (ydcC) of Bacillus subtilis (strain 168).